Reading from the N-terminus, the 200-residue chain is NADH-quinone oxidoreductase subunit C (200 aa).

This sequence belongs to the complex I 30 kDa subunit family. As to quaternary structure, NDH-1 is composed of 14 different subunits. Subunits NuoB, C, D, E, F, and G constitute the peripheral sector of the complex.

It is found in the cell inner membrane. It carries out the reaction a quinone + NADH + 5 H(+)(in) = a quinol + NAD(+) + 4 H(+)(out). Its function is as follows. NDH-1 shuttles electrons from NADH, via FMN and iron-sulfur (Fe-S) centers, to quinones in the respiratory chain. The immediate electron acceptor for the enzyme in this species is believed to be ubiquinone. Couples the redox reaction to proton translocation (for every two electrons transferred, four hydrogen ions are translocated across the cytoplasmic membrane), and thus conserves the redox energy in a proton gradient. This is NADH-quinone oxidoreductase subunit C from Rhizobium rhizogenes (strain K84 / ATCC BAA-868) (Agrobacterium radiobacter).